Consider the following 500-residue polypeptide: Glycerol kinase (500 aa).

T12 contributes to the ADP binding site. ATP contacts are provided by T12, T13, and S14. T12 is a binding site for sn-glycerol 3-phosphate. R16 contacts ADP. Residues R82, E83, Y135, and D245 each coordinate sn-glycerol 3-phosphate. 5 residues coordinate glycerol: R82, E83, Y135, D245, and Q246. Residues T267 and G310 each coordinate ADP. T267, G310, Q314, and G411 together coordinate ATP. 2 residues coordinate ADP: G411 and N415.

The protein belongs to the FGGY kinase family. Homotetramer and homodimer (in equilibrium).

It carries out the reaction glycerol + ATP = sn-glycerol 3-phosphate + ADP + H(+). Its pathway is polyol metabolism; glycerol degradation via glycerol kinase pathway; sn-glycerol 3-phosphate from glycerol: step 1/1. With respect to regulation, activated by phosphorylation and inhibited by fructose 1,6-bisphosphate (FBP). Functionally, key enzyme in the regulation of glycerol uptake and metabolism. Catalyzes the phosphorylation of glycerol to yield sn-glycerol 3-phosphate. The chain is Glycerol kinase from Clostridium perfringens (strain ATCC 13124 / DSM 756 / JCM 1290 / NCIMB 6125 / NCTC 8237 / Type A).